The chain runs to 98 residues: Class II hydrophobin 3 (98 aa).

An N-terminal signal peptide occupies residues 1–18 (MQFTTTTLIAILSALAVA). N-linked (GlcNAc...) asparagine glycans are attached at residues Asn26 and Asn54. Disulfide bonds link Cys35–Cys83, Cys44–Cys74, Cys45–Cys57, and Cys84–Cys95.

Belongs to the cerato-ulmin hydrophobin family.

It is found in the secreted. The protein localises to the cell wall. In terms of biological role, aerial growth, conidiation, and dispersal of filamentous fungi in the environment rely upon a capability of their secreting small amphipathic proteins called hydrophobins (HPBs) with low sequence identity. Class I can self-assemble into an outermost layer of rodlet bundles on aerial cell surfaces, conferring cellular hydrophobicity that supports fungal growth, development and dispersal; whereas Class II form highly ordered films at water-air interfaces through intermolecular interactions but contribute nothing to the rodlet structure. In Botryotinia fuckeliana, hydrophobins are not involved in conferring surface hydrophobicity to conidia and aerial hyphae and their function in sclerotia and fruiting bodies remains to be investigated. This chain is Class II hydrophobin 3, found in Botryotinia fuckeliana (strain B05.10) (Noble rot fungus).